The sequence spans 286 residues: Bifunctional protein FolD (286 aa).

Residues 165–167 and S190 each bind NADP(+); that span reads GRS.

It belongs to the tetrahydrofolate dehydrogenase/cyclohydrolase family. In terms of assembly, homodimer.

It carries out the reaction (6R)-5,10-methylene-5,6,7,8-tetrahydrofolate + NADP(+) = (6R)-5,10-methenyltetrahydrofolate + NADPH. The enzyme catalyses (6R)-5,10-methenyltetrahydrofolate + H2O = (6R)-10-formyltetrahydrofolate + H(+). It functions in the pathway one-carbon metabolism; tetrahydrofolate interconversion. In terms of biological role, catalyzes the oxidation of 5,10-methylenetetrahydrofolate to 5,10-methenyltetrahydrofolate and then the hydrolysis of 5,10-methenyltetrahydrofolate to 10-formyltetrahydrofolate. This chain is Bifunctional protein FolD, found in Staphylococcus aureus (strain MRSA252).